The primary structure comprises 113 residues: UPF0122 protein LAF_1235 (113 aa).

The protein belongs to the UPF0122 family.

Functionally, might take part in the signal recognition particle (SRP) pathway. This is inferred from the conservation of its genetic proximity to ftsY/ffh. May be a regulatory protein. This Limosilactobacillus fermentum (strain NBRC 3956 / LMG 18251) (Lactobacillus fermentum) protein is UPF0122 protein LAF_1235.